A 58-amino-acid polypeptide reads, in one-letter code: KappaPI-actitoxin-Avd3c (58 aa).

Positions 5–55 (CLLPMDVGRCRARHPRYYYNSSSRRCEKFIYGGCRGNANNFITKKECEKVC) constitute a BPTI/Kunitz inhibitor domain. Intrachain disulfides connect Cys-5–Cys-55, Cys-14–Cys-38, and Cys-30–Cys-51.

The protein belongs to the venom Kunitz-type family. Sea anemone type 2 potassium channel toxin subfamily.

The protein resides in the secreted. It is found in the nematocyst. In terms of biological role, dual-function toxin that inhibits both the serine protease trypsin (Kd&lt;30 nM) and voltage-gated potassium channels Kv1.2/KCNA2 (IC(50)=1100 nM). The chain is KappaPI-actitoxin-Avd3c from Anemonia sulcata (Mediterranean snakelocks sea anemone).